A 463-amino-acid chain; its full sequence is Lariat debranching enzyme (463 aa).

A divalent metal cation contacts are provided by Cys8, His10, Asp33, and Asn78. A lariat recognition loop region spans residues 118–148; that stretch reads SGIYSAMDYKKGRYEGLPYNYKMLKSIYHTR. Residues His168, His220, and His222 each contribute to the a divalent metal cation site. Residues 250–324 form a disordered region; it reads SGFSMKGLNE…QVTKFLALDK (75 aa). Positions 256–267 are enriched in polar residues; the sequence is GLNEPSQERLPV. Composition is skewed to basic and acidic residues over residues 276-289 and 299-323; these read DEEG…EKQD and CRKE…LALD.

The protein belongs to the lariat debranching enzyme family. The cofactor is Fe(2+). Zn(2+) is required as a cofactor. Requires Mn(2+) as cofactor.

It is found in the nucleus. It localises to the cytoplasm. Its activity is regulated as follows. Active in presence of diverse metals including Fe(2+), Zn(2+) and Mn(2+). Binds two metal cations in two adjacent alpha and beta metal-binding pockets. Cleaves the 2'-5' phosphodiester linkage at the branch point of lariat intron pre-mRNAs after splicing and converts them into linear molecules that are subsequently degraded, thereby facilitating ribonucleotide turnover. The protein is Lariat debranching enzyme (dbr1) of Schizosaccharomyces pombe (strain 972 / ATCC 24843) (Fission yeast).